The primary structure comprises 75 residues: Small ribosomal subunit protein bS21 (75 aa).

The interval 52-75 (RRARKLARKRAQREGLIGGRPGAR) is disordered. A compositionally biased stretch (basic residues) spans 53–62 (RARKLARKRA).

It belongs to the bacterial ribosomal protein bS21 family.

The sequence is that of Small ribosomal subunit protein bS21 from Brucella anthropi (strain ATCC 49188 / DSM 6882 / CCUG 24695 / JCM 21032 / LMG 3331 / NBRC 15819 / NCTC 12168 / Alc 37) (Ochrobactrum anthropi).